The primary structure comprises 123 residues: Holo-[acyl-carrier-protein] synthase (123 aa).

Mg(2+)-binding residues include aspartate 8 and glutamate 56.

The protein belongs to the P-Pant transferase superfamily. AcpS family. Mg(2+) serves as cofactor.

Its subcellular location is the cytoplasm. The enzyme catalyses apo-[ACP] + CoA = holo-[ACP] + adenosine 3',5'-bisphosphate + H(+). Functionally, transfers the 4'-phosphopantetheine moiety from coenzyme A to a Ser of acyl-carrier-protein. The polypeptide is Holo-[acyl-carrier-protein] synthase (Clostridium botulinum (strain Eklund 17B / Type B)).